The primary structure comprises 200 residues: Putative AgrB-like protein (200 aa).

5 helical membrane-spanning segments follow: residues 49-69 (LIIT…LVFM), 88-108 (LLCT…IQFT), 114-134 (LFRF…SPAV), 148-168 (ALKH…FLVS), and 171-191 (LGTI…PLKG).

This sequence belongs to the AgrB family.

Its subcellular location is the cell membrane. Its function is as follows. May be involved in the proteolytic processing of a quorum sensing system signal molecule precursor. This Lactiplantibacillus plantarum (strain ATCC BAA-793 / NCIMB 8826 / WCFS1) (Lactobacillus plantarum) protein is Putative AgrB-like protein.